Here is a 106-residue protein sequence, read N- to C-terminus: Small ribosomal subunit protein uS10 (106 aa).

This sequence belongs to the universal ribosomal protein uS10 family. Part of the 30S ribosomal subunit.

Its function is as follows. Involved in the binding of tRNA to the ribosomes. The chain is Small ribosomal subunit protein uS10 from Mesomycoplasma hyopneumoniae (strain 232) (Mycoplasma hyopneumoniae).